We begin with the raw amino-acid sequence, 430 residues long: Adenylosuccinate synthetase (430 aa).

GTP contacts are provided by residues 12-18 and 40-42; these read GDEGKGK and GHT. Catalysis depends on Asp-13, which acts as the Proton acceptor. Mg(2+) contacts are provided by Asp-13 and Gly-40. Residues 13–16, 38–41, Thr-128, Arg-142, Gln-223, Thr-238, and Arg-302 contribute to the IMP site; these read DEGK and NAGH. His-41 (proton donor) is an active-site residue. Residue 298–304 coordinates substrate; it reads TTTGRPR. GTP-binding positions include Arg-304, 330–332, and 412–414; these read SID and SVG.

The protein belongs to the adenylosuccinate synthetase family. In terms of assembly, homodimer. Requires Mg(2+) as cofactor.

Its subcellular location is the cytoplasm. It catalyses the reaction IMP + L-aspartate + GTP = N(6)-(1,2-dicarboxyethyl)-AMP + GDP + phosphate + 2 H(+). It functions in the pathway purine metabolism; AMP biosynthesis via de novo pathway; AMP from IMP: step 1/2. Functionally, plays an important role in the de novo pathway of purine nucleotide biosynthesis. Catalyzes the first committed step in the biosynthesis of AMP from IMP. The polypeptide is Adenylosuccinate synthetase (Streptococcus equi subsp. zooepidemicus (strain H70)).